A 581-amino-acid polypeptide reads, in one-letter code: Arginine--tRNA ligase (581 aa).

A 'HIGH' region motif is present at residues 126-136 (PNLAKEMHVGH).

The protein belongs to the class-I aminoacyl-tRNA synthetase family. Monomer.

Its subcellular location is the cytoplasm. It carries out the reaction tRNA(Arg) + L-arginine + ATP = L-arginyl-tRNA(Arg) + AMP + diphosphate. In Shewanella pealeana (strain ATCC 700345 / ANG-SQ1), this protein is Arginine--tRNA ligase.